The sequence spans 756 residues: MVLAAARVLLLTLAALGASGQGQMPLGGDLGPQMLRELQETNAALQDVRDLLRQQVKEITFLKNTVMECDACGMQPARTPKLTVRPLSQCSPGFCFPGVACTETANGARCGPCPEGFTGNGSHCADVNECTAHPCFPRVRCINTSPGFRCEACPPGFSGPTHEGVGLAFAKANKQVCTDINECETGQHNCVPNSVCVNTVGSFQCGPCQPGFVGDQASGCRRRPQRFCPDGTPSPCHEKADCVLERDGSRSCVCAVGWAGNGLICGRDTDLDGFPDEKLRCSERQCRKDNCVTVPNSGQEDVDQDGIGDACDPDADGDGVLNEKDNCPLVRNPDQRNTDGDKWGDACDNCRSQKNDDQKDTDKDGRGDACDDDIDGDRIRNPVDNCPKVPNSDQKDTDGDGVGDACDNCPQKSNADQRDVDHDFVGDACDSDQDQDGDGHQDSKDNCPTVPNSAQQDSDHDGQGDACDDDDDNDGVPDSRDNCRLVPNPGQEDMDRDGVGDACQGDFDADKVVDKIDVCPENAEVTLTDFRAFQTVVLDPEGDAQIDPNWVVLNQGMEIVQTMNSDPGLAVGYTAFNGVDFEGTFHVNTATDDDYAGFIFGYQDSSSFYVVMWKQMEQTYWQANPFRAVAEPGIQLKAVKSSTGPGEQLRNALWHTGDTASQVRLLWKDPRNVGWKDKTSYRWFLQHRPQVGYIRVRFYEGPELVADSNVILDTTMRGGRLGVFCFSQENIIWANLRYRCNDTIPEDYEAQRLLQA.

An N-terminal signal peptide occupies residues 1 to 20 (MVLAAARVLLLTLAALGASG). The interval 22–85 (GQMPLGGDLG…PARTPKLTVR (64 aa)) is COMP N-terminal. The EGF-like 1 domain occupies 86 to 125 (PLSQCSPGFCFPGVACTETANGARCGPCPEGFTGNGSHCA). 10 disulfide bridges follow: cysteine 90/cysteine 101, cysteine 95/cysteine 110, cysteine 113/cysteine 124, cysteine 130/cysteine 141, cysteine 135/cysteine 150, cysteine 183/cysteine 196, cysteine 190/cysteine 205, cysteine 228/cysteine 242, cysteine 236/cysteine 252, and cysteine 254/cysteine 265. Asparagine 120 is a glycosylation site (N-linked (GlcNAc...) asparagine). Residues 126–178 (DVNECTAHPCFPRVRCINTSPGFRCEACPPGFSGPTHEGVGLAFAKANKQVCT) enclose the EGF-like 2; calcium-binding domain. Residues 179 to 218 (DINECETGQHNCVPNSVCVNTVGSFQCGPCQPGFVGDQAS) enclose the EGF-like 3; calcium-binding domain. Positions 224–266 (PQRFCPDGTPSPCHEKADCVLERDGSRSCVCAVGWAGNGLICG) constitute an EGF-like 4 domain. TSP type-3 repeat units follow at residues 267–299 (RDTD…NSGQ), 300–335 (EDVD…NPDQ), 336–358 (RNTD…NDDQ), 359–394 (KDTD…NSDQ), 395–417 (KDTD…NADQ), 418–455 (RDVD…NSAQ), 456–491 (QDSD…NPGQ), and 492–527 (EDMD…EVTL). Positions 322–502 (NEKDNCPLVR…DMDRDGVGDA (181 aa)) are disordered. Basic and acidic residues-rich tracts occupy residues 333–345 (PDQR…KWGD), 351–369 (RSQK…RGDA), and 415–425 (ADQRDVDHDFV). Residues 366-368 (RGD) carry the Cell attachment site motif. Over residues 466–475 (ACDDDDDNDG) the composition is skewed to acidic residues. The tract at residues 526 to 756 (TLTDFRAFQT…DYEAQRLLQA (231 aa)) is mediates cell survival and induction of the IAP family of survival proteins. The region spanning 531–745 (RAFQTVVLDP…LRYRCNDTIP (215 aa)) is the TSP C-terminal domain. Asparagine 741 carries an N-linked (GlcNAc...) asparagine glycan.

This sequence belongs to the thrombospondin family. As to quaternary structure, pentamer; disulfide-linked. Exists in a more compact conformation in the presence of calcium and shows a more extended conformation in the absence of calcium. Interacts with ITGB3, ITGA5 and FN1. Binding to FN1 requires the presence of divalent cations (Ca(2+), Mg(2+) or Mn(2+)). The greatest amount of binding is seen in the presence of Mn(2+). Interacts with MATN1, MATN3, MATN4 and ACAN. Binds heparin, heparan sulfate and chondroitin sulfate. EDTA dimishes significantly its binding to ACAN and abolishes its binding to MATN3, MATN4 and chondroitin sulfate. Interacts with collagen I, II and IX, and interaction with these collagens is dependent on the presence of zinc ions. Interacts with ADAMTS12. Interacts with ITGA7. The cofactor is Ca(2+). Post-translationally, proteolytically cleaved by metalloproteases ADAMTS4 and ADAMTS1 with ADAMTS4 showing more potent activity.

It is found in the secreted. The protein resides in the extracellular space. Its subcellular location is the extracellular matrix. Functionally, plays a role in the structural integrity of cartilage via its interaction with other extracellular matrix proteins such as the collagens and fibronectin. Can mediate the interaction of chondrocytes with the cartilage extracellular matrix through interaction with cell surface integrin receptors. Could play a role in the pathogenesis of osteoarthritis. Potent suppressor of apoptosis in both primary chondrocytes and transformed cells. Suppresses apoptosis by blocking the activation of caspase-3 and by inducing the IAP family of survival proteins (BIRC3, BIRC2, BIRC5 and XIAP). Essential for maintaining a vascular smooth muscle cells (VSMCs) contractile/differentiated phenotype under physiological and pathological stimuli. Maintains this phenotype of VSMCs by interacting with ITGA7. This is Cartilage oligomeric matrix protein (COMP) from Bos taurus (Bovine).